The sequence spans 339 residues: Cobalt-precorrin-5B C(1)-methyltransferase (339 aa).

Belongs to the CbiD family.

It carries out the reaction Co-precorrin-5B + S-adenosyl-L-methionine = Co-precorrin-6A + S-adenosyl-L-homocysteine. Its pathway is cofactor biosynthesis; adenosylcobalamin biosynthesis; cob(II)yrinate a,c-diamide from sirohydrochlorin (anaerobic route): step 6/10. Its function is as follows. Catalyzes the methylation of C-1 in cobalt-precorrin-5B to form cobalt-precorrin-6A. The chain is Cobalt-precorrin-5B C(1)-methyltransferase from Methanosarcina acetivorans (strain ATCC 35395 / DSM 2834 / JCM 12185 / C2A).